The chain runs to 754 residues: Dynein regulatory complex protein 1 (754 aa).

Disordered regions lie at residues 1–32 and 55–76; these read MNPS…SDNP and LGEY…YKQK. Positions 98–388 form a coiled coil; the sequence is QVAADIREIH…QFKDLQKAIR (291 aa). The tract at residues 587-616 is disordered; that stretch reads MSQTDRRSSASKSDGDPTELEDQQGSDNGS. The stretch at 704 to 743 forms a coiled coil; that stretch reads VLTQRAKLLMENDSLEQQNAEMQSLLQQYLQAKVNLELQV.

It belongs to the DRC1 family. In terms of assembly, component of the nexin-dynein regulatory complex (N-DRC). Interacts with CCDC65/DRC2, DRC3, GAS8/DRC4 and TCTE1/DRC5.

The protein resides in the cytoplasm. The protein localises to the cytoskeleton. It is found in the cilium axoneme. It localises to the flagellum axoneme. Component of the nexin-dynein regulatory complex (N-DRC) a key regulator of ciliary/flagellar motility which maintains the alignment and integrity of the distal axoneme and regulates microtubule sliding in motile axonemes. Plays a critical role in the assembly of N-DRC and also stabilizes the assembly of multiple inner dynein arms and radial spokes. Coassembles with CCDC65/DRC2 to form a central scaffold needed for assembly of the N-DRC and its attachment to the outer doublet microtubules. The chain is Dynein regulatory complex protein 1 (Drc1) from Rattus norvegicus (Rat).